The following is a 1430-amino-acid chain: MSIPHSAKQSSPLSSRRRSVTNTTPLLTPRHSRDNSSTQISSAKNITSSSPSTITNESSKRNKQNLVLSTSFISTKRLENSAPSPTSPLMARRTRSTMTKALLNLKAEINNQYQELARLRKKKDDIEHLRDSTISDIYSGSYSTNHLQKHSMRIRANTQLREIDNSIKRVEKHIFDLKQQFDKKRQRSLTTSSSIKADVGSIRNDDGQNNDSEELGDHDSLTDQVTLDDEYLTTPTSGTERNSQQNLNRNSTVNSRNNENHSTLSIPDLDGSNKVNLTGDTEKDLGDLENENQIFTSTTTEAATWLVSDYMQSFQEKNVNPDFIAQKANGLVTLLKEHSEIRKDLVLTSFMSSIQNLLLNGNKLIAASAYRVCRYLINSSIFIDELLELRLDAFIIISLAKDNSFQIEREQALKMVRRFIEYNNGVTQGIMQAIISCVEKPEDSLRHMALETLLELCFVAPEMVKECRGMRVIEGFLQDYTSFSLASVILDTILQLMATHKTRQHFLEDFNVSVLTTVFSDTNTKSNVNVEKMQNASTLISITLNSYNGFMLFSNNNFKPLKQLVSFFQIPICAQYLIDIFLDVLKIKPLPYKPRGRHSHSFKPIPSQYYKECMSVNQRLALIVLILENSEFVPHLLELLNEEDRDDHLVAKGRYLLTEYFNLRMNLVDKKYTSVSKPIYKENFTYVNETFQFKKIAYKMNRNRNTIGMSGIDYAQNIKSFSKNIKENTLLREVDDFRFRRMVYDSKVLQTKDFTRWNWNIINELLEGPLLNKKQLEELVKSTKFIRRLLVFYRPLRLRFSNVNKGAKLSQKYVQVGCQFFKTLTATPEGMKILMDDTKIIPQLASLMFRAMEGNISGNIFNKNKLREKIIFGYFKFIGILTQSKNGVHILTRWNFFTVIYKMFQFESKLGLEFLLLTIPELDLKYSSHCRVIIGKALVVANEKVRIEATKHIGDKLKELLSTKESDLKLKANKVKLQQFKMEMLTRQLYDLSPSVVAVADQALYECIVAGNGSEELGTSFRMFLNQMVFIRSPILFELLSRPYGFQLLNEINFVKEERDSWLSKKNIEYVHIVEEFLKKNESINAKSLTFQQKSRLPLHFYESLTKTEDGILLLSQTGDLVTFMNVIKKYVNGNNMATVENAKEILDLKAALWCVGFIGSTELGIGLLDNYSLVEDIIEVAYNASVTSVRFTAFYVLGLISMTREGCEILDEMGWNCCVSVQDEPIGIALPNRLDRFLSYNEHKWSAFGEYSDEMIVFNKSDGDLIEKCLPIEFDLDKLLKEKDTAENPLNEKIITNKYDNDITSQTITVSGENSSLFANEGLSSPYVTQYRNDDDSIESKVLHIVSQLGNHILSNHAVKEITEINNKYGPRLFENEKMFFKVFNMMSKYRFKPHVRKFLCGLFINNRALENVIRHDNKRDKRPANFTR.

The tract at residues 1-62 (MSIPHSAKQS…TITNESSKRN (62 aa)) is disordered. Polar residues-rich tracts occupy residues 7 to 26 (AKQS…TTPL) and 35 to 44 (NSSTQISSAK). S19 carries the phosphoserine modification. Residues 45–57 (NITSSSPSTITNE) show a composition bias toward low complexity. Phosphoserine occurs at positions 81, 84, 87, and 141. The stretch at 91 to 180 (ARRTRSTMTK…EKHIFDLKQQ (90 aa)) forms a coiled coil. The interval 182–285 (DKKRQRSLTT…NLTGDTEKDL (104 aa)) is disordered. The segment covering 233–265 (TTPTSGTERNSQQNLNRNSTVNSRNNENHSTLS) has biased composition (polar residues). Residues 995 to 1100 (SVVAVADQAL…FQQKSRLPLH (106 aa)) form the N-terminal Ras-GEF domain.

This sequence belongs to the RICTOR family. The target of rapamycin complex 2 (TORC2) is composed of at least AVO1, AVO2, BIT61, LST8, TOR2 and TSC11. TORC2 forms a homodimer. Contrary to TORC1, TORC2 does not bind to and is not sensitive to FKBP-rapamycin. TSC11 binds to the N-terminal HEAT repeat region in TOR2 and is required for TORC2 integrity by tethering AVO1 and AVO2 to the complex. Post-translationally, phosphorylated by TOR2; when part of TORC2.

It is found in the cell membrane. Its subcellular location is the vacuole membrane. Functionally, essential component of TORC2, which regulates cell cycle-dependent polarization of the actin-cytoskeleton and cell wall integrity. TORC2 controls polarity of the actin cytoskeleton, which is required for orienting the secretory pathway toward discrete growth sites, via the RHO1/PKC1/MAPK cell integrity pathway. TSC11 may exert its functions through two distinct mechanisms, one mediated by AVO1 and the other mediated by AVO2 and SLM1. This is Target of rapamycin complex 2 subunit TSC11 (TSC11) from Saccharomyces cerevisiae (strain ATCC 204508 / S288c) (Baker's yeast).